Consider the following 672-residue polypeptide: DNA ligase (672 aa).

NAD(+) is bound by residues 32 to 36 (DSEYD), 81 to 82 (SL), and E114. Residue K116 is the N6-AMP-lysine intermediate of the active site. Residues R137, E174, K291, and K315 each coordinate NAD(+). 4 residues coordinate Zn(2+): C409, C412, C427, and C433. In terms of domain architecture, BRCT spans 592–672 (VNENPFKEKT…EFLEIVNSFS (81 aa)).

The protein belongs to the NAD-dependent DNA ligase family. LigA subfamily. Mg(2+) is required as a cofactor. It depends on Mn(2+) as a cofactor.

The catalysed reaction is NAD(+) + (deoxyribonucleotide)n-3'-hydroxyl + 5'-phospho-(deoxyribonucleotide)m = (deoxyribonucleotide)n+m + AMP + beta-nicotinamide D-nucleotide.. Its function is as follows. DNA ligase that catalyzes the formation of phosphodiester linkages between 5'-phosphoryl and 3'-hydroxyl groups in double-stranded DNA using NAD as a coenzyme and as the energy source for the reaction. It is essential for DNA replication and repair of damaged DNA. In Actinobacillus succinogenes (strain ATCC 55618 / DSM 22257 / CCUG 43843 / 130Z), this protein is DNA ligase.